Reading from the N-terminus, the 749-residue chain is Tryptophan 2-monooxygenase (749 aa).

FMN is bound by residues serine 232, glutamate 252, lysine 260, and arginine 280. Arginine 280 provides a ligand contact to substrate.

It belongs to the tryptophan 2-monooxygenase family. It depends on FMN as a cofactor.

It catalyses the reaction L-tryptophan + O2 = indole-3-acetamide + CO2 + H2O. The protein operates within plant hormone metabolism; auxin biosynthesis. The chain is Tryptophan 2-monooxygenase (aux1) from Rhizobium rhizogenes (Agrobacterium rhizogenes).